The primary structure comprises 558 residues: DALR anticodon-binding domain-containing protein 3 (558 aa).

The disordered stretch occupies residues 213–240 (KALENSAYRDRETEKGKRRSRGEEIEGE).

The chain is DALR anticodon-binding domain-containing protein 3 (dalrd3) from Danio rerio (Zebrafish).